The primary structure comprises 520 residues: GMP synthase [glutamine-hydrolyzing] (520 aa).

The 194-residue stretch at 9 to 202 (TILIIDFGSQ…VHRIVGVKPG (194 aa)) folds into the Glutamine amidotransferase type-1 domain. The Nucleophile role is filled by C86. Active-site residues include H176 and E178. Positions 203-395 (WTMGAYREQA…LGLPDSFIGR (193 aa)) constitute a GMPS ATP-PPase domain. Residue 230–236 (SGGVDSS) participates in ATP binding.

In terms of assembly, homodimer.

The catalysed reaction is XMP + L-glutamine + ATP + H2O = GMP + L-glutamate + AMP + diphosphate + 2 H(+). The protein operates within purine metabolism; GMP biosynthesis; GMP from XMP (L-Gln route): step 1/1. Its function is as follows. Catalyzes the synthesis of GMP from XMP. The sequence is that of GMP synthase [glutamine-hydrolyzing] from Brucella melitensis biotype 2 (strain ATCC 23457).